The sequence spans 1029 residues: MTMITPSFPGNSLAVVLQRRDWENPGVTQLNRLAAHPPFASWRNSEEARTDRPSQQLRSLNGEWRFAWFPAPEAVPESWLECDLPEADTVVVPSNWQMHGYDAPIYTNVTYPITVNPPFVPTENPTGCYSLTFNVDESWLQEGQTRIIFDGVNSAFHLWCNGRWVGYGQDSRLPSEFDLSAFLRAGENRLAVMVLRWSDGSYLEDQDMWRMSGIFRDVSLLHKPTTQISDFHVATRFNDDFSRAVLEAEVQMCGELRDYLRVTVSLWQGETQVASGTAPFGGEIIDERGGYADRVTLRLNVENPKLWSAEIPNLYRAVVELHTADGTLIEAEACDVGFREVRIENGLLLLNGKPLLIRGVNRHEHHPLHGQVMDEQTMVQDILLMKQNNFNAVRCSHYPNHPLWYTLCDRYGLYVVDEANIETHGMVPMNRLTDDPRWLPAMSERVTRMVQRDRNHPSVIIWSLGNESGHGANHDALYRWIKSVDPSRPVQYEGGGADTTATDIICPMYARVDEDQPFPAVPKWSIKKWLSLPGETRPLILCEYAHAMGNSLGGFAKYWQAFRQYPRLQGGFVWDWVDQSLIKYDENGNPWSAYGGDFGDTPNDRQFCMNGLVFADRTPHPALTEAKHQQQFFQFRLSGQTIEVTSEYLFRHSDNELLHWMVALDGKPLASGEVPLDVAPQGKQLIELPELPQPESAGQLWLTVRVVQPNATAWSEAGHISAWQQWRLAENLSVTLPAASHAIPHLTTSEMDFCIELGNKRWQFNRQSGFLSQMWIGDKKQLLTPLRDQFTRAPLDNDIGVSEATRIDPNAWVERWKAAGHYQAEAALLQCTADTLADAVLITTAHAWQHQGKTLFISRKTYRIDGSGQMAITVDVEVASDTPHPARIGLNCQLAQVAERVNWLGLGPQENYPDRLTAACFDRWDLPLSDMYTPYVFPSENGLRCGTRELNYGPHQWRGDFQFNISRYSQQQLMETSHRHLLHAEEGTWLNIDGFHMGIGGDDSWSPSVSAEFQLSAGRYHYQLVWCQK.

Substrate contacts are provided by asparagine 108 and aspartate 207. Aspartate 207 serves as a coordination point for Na(+). Positions 422, 424, and 467 each coordinate Mg(2+). Substrate-binding positions include glutamate 467 and 543–546 (EYAH). Glutamate 467 functions as the Proton donor in the catalytic mechanism. Residue glutamate 543 is the Nucleophile of the active site. Asparagine 603 contributes to the Mg(2+) binding site. Residues phenylalanine 607 and asparagine 610 each contribute to the Na(+) site. Residues asparagine 610 and tryptophan 1005 each contribute to the substrate site.

Belongs to the glycosyl hydrolase 2 family. In terms of assembly, homotetramer. It depends on Mg(2+) as a cofactor. Na(+) serves as cofactor.

The enzyme catalyses Hydrolysis of terminal non-reducing beta-D-galactose residues in beta-D-galactosides.. The sequence is that of Beta-galactosidase from Escherichia coli.